The chain runs to 291 residues: 4-diphosphocytidyl-2-C-methyl-D-erythritol kinase (291 aa).

Lys21 is a catalytic residue. Residue 104–114 participates in ATP binding; the sequence is PMGGGLGGGSS. Residue Asp146 is part of the active site.

This sequence belongs to the GHMP kinase family. IspE subfamily.

The enzyme catalyses 4-CDP-2-C-methyl-D-erythritol + ATP = 4-CDP-2-C-methyl-D-erythritol 2-phosphate + ADP + H(+). The protein operates within isoprenoid biosynthesis; isopentenyl diphosphate biosynthesis via DXP pathway; isopentenyl diphosphate from 1-deoxy-D-xylulose 5-phosphate: step 3/6. Catalyzes the phosphorylation of the position 2 hydroxy group of 4-diphosphocytidyl-2C-methyl-D-erythritol. In Methylococcus capsulatus (strain ATCC 33009 / NCIMB 11132 / Bath), this protein is 4-diphosphocytidyl-2-C-methyl-D-erythritol kinase.